The primary structure comprises 190 residues: Xanthine phosphoribosyltransferase 1 (190 aa).

Xanthine contacts are provided by Leu20 and Asn27. 129 to 133 (AQGCA) is a 5-phospho-alpha-D-ribose 1-diphosphate binding site. Lys157 contacts xanthine.

Belongs to the purine/pyrimidine phosphoribosyltransferase family. Xpt subfamily. Homodimer.

Its subcellular location is the cytoplasm. The enzyme catalyses XMP + diphosphate = xanthine + 5-phospho-alpha-D-ribose 1-diphosphate. The protein operates within purine metabolism; XMP biosynthesis via salvage pathway; XMP from xanthine: step 1/1. Its function is as follows. Converts the preformed base xanthine, a product of nucleic acid breakdown, to xanthosine 5'-monophosphate (XMP), so it can be reused for RNA or DNA synthesis. The polypeptide is Xanthine phosphoribosyltransferase 1 (Clostridium perfringens (strain ATCC 13124 / DSM 756 / JCM 1290 / NCIMB 6125 / NCTC 8237 / Type A)).